The chain runs to 542 residues: Chaperonin GroEL (542 aa).

Residues 30–33, K51, 87–91, G415, 480–482, and D496 contribute to the ATP site; these read TLGP, DGTTT, and NAA.

This sequence belongs to the chaperonin (HSP60) family. In terms of assembly, forms a cylinder of 14 subunits composed of two heptameric rings stacked back-to-back. Interacts with the co-chaperonin GroES.

Its subcellular location is the cytoplasm. It catalyses the reaction ATP + H2O + a folded polypeptide = ADP + phosphate + an unfolded polypeptide.. Together with its co-chaperonin GroES, plays an essential role in assisting protein folding. The GroEL-GroES system forms a nano-cage that allows encapsulation of the non-native substrate proteins and provides a physical environment optimized to promote and accelerate protein folding. This is Chaperonin GroEL from Tremblaya princeps.